The primary structure comprises 486 residues: Vanillin dehydrogenase (486 aa).

NAD(+)-binding positions include 210–211, 230–231, and 252–254; these read GP, GS, and ELG. Glutamate 252 acts as the Proton acceptor in catalysis. Cysteine 286 acts as the Nucleophile in catalysis. 380 to 382 contributes to the NAD(+) binding site; it reads EVF.

This sequence belongs to the aldehyde dehydrogenase family.

It catalyses the reaction vanillin + NAD(+) + H2O = vanillate + NADH + 2 H(+). Catalyzes NAD(+)-dependent oxidation of vanillin to vanillate. Also oxidizes other aromatic aldehydes including benzaldehyde, coniferyl aldehyde and cinnamaldehyde, but has a preference for vanillin. Not active with NADP(+). Involved in the degradation pathway of lignin-derived aromatic compounds of plant cell walls. Catalyzes the conversion of vanillin to vanillate due to toxicity of vanillin to the cells. The chain is Vanillin dehydrogenase from Amycolatopsis sp. (strain ATCC 39116 / 75iv2).